The sequence spans 119 residues: Outer membrane protein assembly factor BamE (119 aa).

An N-terminal signal peptide occupies residues 1–19 (MQFTKWFIALPLAVTALSG). Cys-20 carries N-palmitoyl cysteine lipidation. Residue Cys-20 is the site of S-diacylglycerol cysteine attachment.

Belongs to the BamE family. In terms of assembly, part of the Bam complex.

The protein localises to the cell outer membrane. Part of the outer membrane protein assembly complex, which is involved in assembly and insertion of beta-barrel proteins into the outer membrane. The polypeptide is Outer membrane protein assembly factor BamE (Vibrio cholerae serotype O1 (strain ATCC 39541 / Classical Ogawa 395 / O395)).